A 384-amino-acid polypeptide reads, in one-letter code: Aurora kinase (384 aa).

Polar residues-rich tracts occupy residues 1–12 and 19–29; these read MSYPNNKENSNN and SVPSKQPQRVL. The tract at residues 1 to 100 is disordered; that stretch reads MSYPNNKENS…SSSSSSSQSV (100 aa). Positions 30–99 are enriched in low complexity; it reads QQQNTNINNH…SSSSSSSSQS (70 aa). Positions 110–360 constitute a Protein kinase domain; that stretch reads FDIGKLLGMG…LKDVINHPWI (251 aa). ATP-binding positions include 116–124 and lysine 139; that span reads LGMGRFGHV. The active-site Proton acceptor is aspartate 233.

It belongs to the protein kinase superfamily. Ser/Thr protein kinase family. Aurora subfamily. Interacts with icpA. Forms a complex at the central spindle.

The protein localises to the cytoplasm. It localises to the chromosome. The protein resides in the centromere. It is found in the cytoskeleton. Its subcellular location is the spindle pole. The protein localises to the cleavage furrow. It localises to the cell projection. The protein resides in the neuron projection. The enzyme catalyses L-seryl-[protein] + ATP = O-phospho-L-seryl-[protein] + ADP + H(+). It carries out the reaction L-threonyl-[protein] + ATP = O-phospho-L-threonyl-[protein] + ADP + H(+). Part of a chromosomal passenger complex. The sequence is that of Aurora kinase (aurK) from Dictyostelium discoideum (Social amoeba).